We begin with the raw amino-acid sequence, 457 residues long: Mannose-6-phosphate isomerase (457 aa).

Residues Gln-108, His-110, Glu-135, and His-292 each coordinate Zn(2+). Arg-311 is an active-site residue.

The protein belongs to the mannose-6-phosphate isomerase type 1 family. The cofactor is Zn(2+).

Its subcellular location is the cytoplasm. The enzyme catalyses D-mannose 6-phosphate = D-fructose 6-phosphate. It participates in nucleotide-sugar biosynthesis; GDP-alpha-D-mannose biosynthesis; alpha-D-mannose 1-phosphate from D-fructose 6-phosphate: step 1/2. Involved in the synthesis of the GDP-mannose and dolichol-phosphate-mannose required for a number of critical mannosyl transfer reactions. This is Mannose-6-phosphate isomerase (pmi1) from Aspergillus fumigatus (strain ATCC MYA-4609 / CBS 101355 / FGSC A1100 / Af293) (Neosartorya fumigata).